The sequence spans 226 residues: Glutathione S-transferase kappa 1 (226 aa).

Residue 16 to 18 (SPY) coordinates glutathione. K49 is modified (N6-succinyllysine). N53 is a glutathione binding site. K71 and K85 each carry N6-acetyllysine. An N6-acetyllysine; alternate modification is found at K116. K116 bears the N6-succinyllysine; alternate mark. The residue at position 144 (K144) is an N6-succinyllysine. The residue at position 158 (K158) is an N6-acetyllysine; alternate. At K158 the chain carries N6-succinyllysine; alternate. 2 positions are modified to N6-acetyllysine: K165 and K169. Glutathione is bound by residues L183 and 200 to 201 (SD).

This sequence belongs to the GST superfamily. Kappa family. Homodimer. Ubiquitous.

The protein resides in the peroxisome. The catalysed reaction is RX + glutathione = an S-substituted glutathione + a halide anion + H(+). Its function is as follows. Glutathione S-transferase that catalyzes the conjugation of glutathione to exogenous and endogenous compounds. Significant glutathione conjugating activity is found only with the model substrate, 1-chloro-2,4-dinitrobenzene (CDNB). This chain is Glutathione S-transferase kappa 1 (GSTK1), found in Homo sapiens (Human).